The primary structure comprises 512 residues: Secreted triacylglycerol lipase LIP5 (512 aa).

The N-terminal stretch at 1-17 is a signal peptide; that stretch reads MMYASLVHWLALAVALA. Cysteine 118 and cysteine 292 are oxidised to a cystine. Residue serine 203 is the Nucleophile of the active site. A glycan (N-linked (GlcNAc...) asparagine) is linked at asparagine 316. Aspartate 352 is an active-site residue. Residue asparagine 361 is glycosylated (N-linked (GlcNAc...) asparagine). The active site involves histidine 386. A glycan (N-linked (GlcNAc...) asparagine) is linked at asparagine 453. Residues 480–512 are disordered; the sequence is KGDISPGEGGDHTKESKKAAAKFKAEKKHGKHH. Residues 488-497 show a composition bias toward basic and acidic residues; that stretch reads GGDHTKESKK. The segment covering 498-512 has biased composition (basic residues); sequence AAAKFKAEKKHGKHH.

This sequence belongs to the AB hydrolase superfamily. Lipase family. Class Lip subfamily.

It is found in the secreted. It catalyses the reaction a triacylglycerol + H2O = a diacylglycerol + a fatty acid + H(+). It carries out the reaction a monoacylglycerol + H2O = glycerol + a fatty acid + H(+). The catalysed reaction is a diacylglycerol + H2O = a monoacylglycerol + a fatty acid + H(+). In terms of biological role, secreted lipase that hydrolyzes acylglycerol lipids such as triacylglycerols and consequently releases free fatty acid. Can hydrolyze 4-nitrophenyl palmitate to release 4-nitrophenol and palmitoic acid. Due to an absence of fatty acid synthase genes in Malassezia species, secretory lipases are essential for the yeast to generate free fatty acids from degradation of sebum and assimilate them as lipid sources for growth. Plays an essential role at the pathogen-host interface during disease progression. This is Secreted triacylglycerol lipase LIP5 from Malassezia restricta (strain ATCC 96810 / NBRC 103918 / CBS 7877) (Seborrheic dermatitis infection agent).